A 245-amino-acid chain; its full sequence is Demethylmenaquinone methyltransferase (245 aa).

Residues threonine 69, aspartate 90, and 118–119 each bind S-adenosyl-L-methionine; that span reads DC.

The protein belongs to the class I-like SAM-binding methyltransferase superfamily. MenG/UbiE family.

The catalysed reaction is a 2-demethylmenaquinol + S-adenosyl-L-methionine = a menaquinol + S-adenosyl-L-homocysteine + H(+). Its pathway is quinol/quinone metabolism; menaquinone biosynthesis; menaquinol from 1,4-dihydroxy-2-naphthoate: step 2/2. In terms of biological role, methyltransferase required for the conversion of demethylmenaquinol (DMKH2) to menaquinol (MKH2). The polypeptide is Demethylmenaquinone methyltransferase (Porphyromonas gingivalis (strain ATCC 33277 / DSM 20709 / CIP 103683 / JCM 12257 / NCTC 11834 / 2561)).